Here is a 262-residue protein sequence, read N- to C-terminus: Zinc finger protein ehn-3 (262 aa).

4 consecutive C2H2-type zinc fingers follow at residues Glu-2 to His-24, Phe-30 to His-52, Phe-59 to His-84, and Ala-92 to His-115. A disordered region spans residues Ser-179–Gly-204. Residues Glu-185–Ile-194 show a composition bias toward low complexity. A compositionally biased stretch (acidic residues) spans Glu-195 to Gly-204. 2 consecutive C2H2-type zinc fingers follow at residues Trp-208–His-230 and Phe-236–His-260.

It belongs to the krueppel C2H2-type zinc-finger protein family.

Its subcellular location is the nucleus. Together with the zinc finger protein ztf-16, plays a role in gonadogenesis, specifically in somatic gonad precursor cell development. This is possibly by regulating tra-1 gene expression. Functionally, required for proper gonadal primordium assembly and somatic gonad precursor cell morphology. This is Zinc finger protein ehn-3 from Caenorhabditis elegans.